The following is a 501-amino-acid chain: Dynein regulatory complex subunit 5 (501 aa).

Residues 1–23 (MQDTVTTSALLDPSHSSVSTQDN) are compositionally biased toward polar residues. 2 disordered regions span residues 1-56 (MQDT…HPRA) and 202-222 (LPAQLRPGDQSDSGSEGEMEE). Residues 24-34 (SSTGGHTSSTS) are compositionally biased toward low complexity. LRR repeat units lie at residues 308 to 321 (VLEELDLSQNLIGD), 335 to 355 (RLRVLNLANNQVRAPGAQSLA), 363 to 383 (NLISLNLRLNCIEDEGGQALA), 391 to 411 (CLTTLHLGGNELSEPTATLLS), and 419 to 439 (TLTSINLSCNHIGLDGGKQLL).

It belongs to the DRC5 family. As to quaternary structure, component of the nexin-dynein regulatory complex (N-DRC). Interacts with DRC1. Interacts with FBXL13/DRC6, DRC3 and DRC7.

It localises to the cell projection. Its subcellular location is the cilium. It is found in the flagellum. The protein resides in the cytoplasm. The protein localises to the cytoskeleton. It localises to the flagellum axoneme. Component of the nexin-dynein regulatory complex (N-DRC) a key regulator of ciliary/flagellar motility which maintains the alignment and integrity of the distal axoneme and regulates microtubule sliding in motile axonemes. May play a role in the assembly of N-DRC. May be required for sperm motility. The protein is Dynein regulatory complex subunit 5 (TCTE1) of Homo sapiens (Human).